A 149-amino-acid chain; its full sequence is MARIPECTILLLLCMCVLAVPAQCFNLQPCVLVNETVSVEKEGCPRCLVFRTTICSGHCPTKEPVYKSPFSVVNQHVCTYGNFRYETIRLPDCADGVDPLVTYPVALSCECSLCSMDTSDCTIESVEPDFCMSQRLPVYESQKPSLYDY.

The N-terminal stretch at 1–24 (MARIPECTILLLLCMCVLAVPAQC) is a signal peptide. 6 disulfide bridges follow: C30–C78, C44–C93, C47–C131, C55–C109, C59–C111, and C114–C121. A glycan (N-linked (GlcNAc...) asparagine) is linked at N34.

It belongs to the glycoprotein hormones subunit beta family. In terms of assembly, heterodimer of an alpha and a beta chain.

The protein localises to the secreted. Involved in gametogenesis and steroidogenesis. In Clupea pallasii (Pacific herring), this protein is Gonadotropin subunit beta-2 (cgbb).